Consider the following 413-residue polypeptide: Serine/threonine transporter SstT (413 aa).

A run of 9 helical transmembrane segments spans residues 21-41 (IGLL…SALG), 61-81 (SVAP…KKVG), 89-109 (IIYL…FASF), 146-166 (ITAL…GLGI), 189-209 (IVHF…ASTL), 224-244 (LAVL…IIVF), 305-325 (MGGA…TLGI), 337-357 (LVAS…LLLI), and 363-383 (LFGI…IIGV).

It belongs to the dicarboxylate/amino acid:cation symporter (DAACS) (TC 2.A.23) family.

The protein resides in the cell inner membrane. The catalysed reaction is L-serine(in) + Na(+)(in) = L-serine(out) + Na(+)(out). It catalyses the reaction L-threonine(in) + Na(+)(in) = L-threonine(out) + Na(+)(out). In terms of biological role, involved in the import of serine and threonine into the cell, with the concomitant import of sodium (symport system). In Mannheimia succiniciproducens (strain KCTC 0769BP / MBEL55E), this protein is Serine/threonine transporter SstT.